A 197-amino-acid chain; its full sequence is uncharacterized protein (197 aa).

4 consecutive transmembrane segments (helical) span residues 12 to 41, 78 to 100, 120 to 142, and 162 to 184; these read LCIFGIGLFVPATGTFACGLLLVLGFWVLF, LIQGFFPLVRMMLCPYLFITALS, VGVFGIMIAGISLVRELVAFGCV, and IRFAATGAGTLISCGIVLWIFRS.

The protein localises to the cell membrane. This is an uncharacterized protein from Treponema pallidum (strain Nichols).